We begin with the raw amino-acid sequence, 219 residues long: Glutathione S-transferase F13 (219 aa).

A GST N-terminal domain is found at 2 to 82; it reads AMKLYGDEMS…YIAEKHRDKG (81 aa). Glutathione-binding positions include 11-12, 40-41, 53-54, and 66-67; these read SA, HK, KV, and ES. The 128-residue stretch at 90 to 217 folds into the GST C-terminal domain; the sequence is DPKEAAIVKL…VSPGLTVAPT (128 aa).

Belongs to the GST superfamily. Phi family.

The protein resides in the cytoplasm. It localises to the cytosol. It carries out the reaction RX + glutathione = an S-substituted glutathione + a halide anion + H(+). Its function is as follows. May be involved in the conjugation of reduced glutathione to a wide number of exogenous and endogenous hydrophobic electrophiles and have a detoxification role against certain herbicides. The chain is Glutathione S-transferase F13 (GSTF13) from Arabidopsis thaliana (Mouse-ear cress).